The sequence spans 310 residues: Aspartate carbamoyltransferase catalytic subunit (310 aa).

Carbamoyl phosphate contacts are provided by R58 and T59. Residue K86 coordinates L-aspartate. Carbamoyl phosphate is bound by residues R108, H136, and Q139. L-aspartate contacts are provided by R169 and R222. Residues G264 and P265 each contribute to the carbamoyl phosphate site.

It belongs to the aspartate/ornithine carbamoyltransferase superfamily. ATCase family. Heterododecamer (2C3:3R2) of six catalytic PyrB chains organized as two trimers (C3), and six regulatory PyrI chains organized as three dimers (R2).

The enzyme catalyses carbamoyl phosphate + L-aspartate = N-carbamoyl-L-aspartate + phosphate + H(+). It participates in pyrimidine metabolism; UMP biosynthesis via de novo pathway; (S)-dihydroorotate from bicarbonate: step 2/3. Catalyzes the condensation of carbamoyl phosphate and aspartate to form carbamoyl aspartate and inorganic phosphate, the committed step in the de novo pyrimidine nucleotide biosynthesis pathway. The chain is Aspartate carbamoyltransferase catalytic subunit from Campylobacter fetus subsp. fetus (strain 82-40).